Here is a 373-residue protein sequence, read N- to C-terminus: 2-aminoethylphosphonate--pyruvate transaminase (373 aa).

An N6-(pyridoxal phosphate)lysine modification is found at Lys-191.

Belongs to the class-V pyridoxal-phosphate-dependent aminotransferase family. PhnW subfamily. Homodimer. Pyridoxal 5'-phosphate serves as cofactor.

The catalysed reaction is (2-aminoethyl)phosphonate + pyruvate = phosphonoacetaldehyde + L-alanine. In terms of biological role, involved in phosphonate degradation. The sequence is that of 2-aminoethylphosphonate--pyruvate transaminase from Burkholderia ambifaria (strain MC40-6).